Reading from the N-terminus, the 620-residue chain is Probable potassium transport system protein Kup 1 (620 aa).

The next 12 membrane-spanning stretches (helical) occupy residues 10-30 (LLIS…LYAL), 50-70 (VLSL…VIVI), 102-122 (MLLG…TPAI), 138-158 (LTPY…MIQK), 168-188 (FGPV…VNIV), 211-231 (MMSF…EALY), 246-266 (WFAL…ALLL), 284-304 (MVVP…QAVI), 336-356 (IYIP…VIGF), 368-388 (IAVT…MALM), 393-413 (WIAV…FFFA), and 415-435 (IIKV…SFTV).

This sequence belongs to the HAK/KUP transporter (TC 2.A.72) family.

The protein localises to the cell inner membrane. It catalyses the reaction K(+)(in) + H(+)(in) = K(+)(out) + H(+)(out). Transport of potassium into the cell. Likely operates as a K(+):H(+) symporter. This Rhodopseudomonas palustris (strain BisB18) protein is Probable potassium transport system protein Kup 1.